Consider the following 533-residue polypeptide: WD repeat-containing protein PAC11 (533 aa).

Over residues 1–19 (MERLKQLEEKRRQLKELRE) the composition is skewed to basic and acidic residues. The tract at residues 1–36 (MERLKQLEEKRRQLKELRERRKQASLFPGSETMGHH) is disordered. WD repeat units follow at residues 380 to 422 (FDEV…YLSL) and 432 to 475 (NHST…AIIG).

In terms of assembly, interacts with NUM1, when DYN1 is present.

The protein resides in the cytoplasm. Its subcellular location is the cytoskeleton. Functionally, required for viability in the absence of the kinesin-related CIN8 mitotic motor. May be a dynein intermediate chain. This chain is WD repeat-containing protein PAC11 (PAC11), found in Saccharomyces cerevisiae (strain ATCC 204508 / S288c) (Baker's yeast).